Consider the following 295-residue polypeptide: Fructose-bisphosphate aldolase class 1 (295 aa).

Catalysis depends on E176, which acts as the Proton acceptor. Catalysis depends on K213, which acts as the Schiff-base intermediate with dihydroxyacetone-P.

The protein belongs to the class I fructose-bisphosphate aldolase family.

The enzyme catalyses beta-D-fructose 1,6-bisphosphate = D-glyceraldehyde 3-phosphate + dihydroxyacetone phosphate. Its pathway is carbohydrate degradation; glycolysis; D-glyceraldehyde 3-phosphate and glycerone phosphate from D-glucose: step 4/4. The protein is Fructose-bisphosphate aldolase class 1 of Clostridium beijerinckii (strain ATCC 51743 / NCIMB 8052) (Clostridium acetobutylicum).